We begin with the raw amino-acid sequence, 455 residues long: UDP-N-acetylmuramoylalanine--D-glutamate ligase (455 aa).

117-123 contacts ATP; the sequence is GTNGKTT.

Belongs to the MurCDEF family.

It localises to the cytoplasm. It catalyses the reaction UDP-N-acetyl-alpha-D-muramoyl-L-alanine + D-glutamate + ATP = UDP-N-acetyl-alpha-D-muramoyl-L-alanyl-D-glutamate + ADP + phosphate + H(+). It participates in cell wall biogenesis; peptidoglycan biosynthesis. In terms of biological role, cell wall formation. Catalyzes the addition of glutamate to the nucleotide precursor UDP-N-acetylmuramoyl-L-alanine (UMA). The sequence is that of UDP-N-acetylmuramoylalanine--D-glutamate ligase from Alkaliphilus metalliredigens (strain QYMF).